The chain runs to 299 residues: tRNA dimethylallyltransferase (299 aa).

Glycine 11 to threonine 18 is a binding site for ATP. Substrate is bound at residue threonine 13–threonine 18. Positions aspartate 36 to glutamine 39 are interaction with substrate tRNA.

It belongs to the IPP transferase family. In terms of assembly, monomer. It depends on Mg(2+) as a cofactor.

It carries out the reaction adenosine(37) in tRNA + dimethylallyl diphosphate = N(6)-dimethylallyladenosine(37) in tRNA + diphosphate. In terms of biological role, catalyzes the transfer of a dimethylallyl group onto the adenine at position 37 in tRNAs that read codons beginning with uridine, leading to the formation of N6-(dimethylallyl)adenosine (i(6)A). This is tRNA dimethylallyltransferase from Streptococcus pyogenes serotype M28 (strain MGAS6180).